The sequence spans 284 residues: Nucleotide-binding protein VSAL_I0495 (284 aa).

8–15 contacts ATP; that stretch reads GNSGAGKS. Position 56–59 (56–59) interacts with GTP; that stretch reads DIRN.

Belongs to the RapZ-like family.

In terms of biological role, displays ATPase and GTPase activities. This Aliivibrio salmonicida (strain LFI1238) (Vibrio salmonicida (strain LFI1238)) protein is Nucleotide-binding protein VSAL_I0495.